We begin with the raw amino-acid sequence, 338 residues long: Nicotinate-nucleotide--dimethylbenzimidazole phosphoribosyltransferase (338 aa).

Glu305 functions as the Proton acceptor in the catalytic mechanism.

The protein belongs to the CobT family.

It carries out the reaction 5,6-dimethylbenzimidazole + nicotinate beta-D-ribonucleotide = alpha-ribazole 5'-phosphate + nicotinate + H(+). It functions in the pathway nucleoside biosynthesis; alpha-ribazole biosynthesis; alpha-ribazole from 5,6-dimethylbenzimidazole: step 1/2. In terms of biological role, catalyzes the synthesis of alpha-ribazole-5'-phosphate from nicotinate mononucleotide (NAMN) and 5,6-dimethylbenzimidazole (DMB). The protein is Nicotinate-nucleotide--dimethylbenzimidazole phosphoribosyltransferase of Sinorhizobium fredii (strain NBRC 101917 / NGR234).